Here is a 239-residue protein sequence, read N- to C-terminus: Tumor protein p53-inducible nuclear protein 1 (239 aa).

The short motif at glutamate 25–isoleucine 37 is the LIR element.

Interacts with p53/TP53 and HIPK2. Interacts with PRKCG, GABARAP, GABARAPL1, GABARAPL2, MAP1LC3A, MAP1LC3B and MAP1LC3C. In terms of tissue distribution, specifically expressed by acinar cells of chronic pancreatitis tissue.

It localises to the cytoplasm. It is found in the cytosol. The protein resides in the nucleus. Its subcellular location is the PML body. The protein localises to the cytoplasmic vesicle. It localises to the autophagosome. Its function is as follows. Antiproliferative and proapoptotic protein involved in cell stress response which acts as a dual regulator of transcription and autophagy. Acts as a positive regulator of autophagy. In response to cellular stress or activation of autophagy, relocates to autophagosomes where it interacts with autophagosome-associated proteins GABARAP, GABARAPL1/L2, MAP1LC3A/B/C and regulates autophagy. Acts as an antioxidant and plays a major role in p53/TP53-driven oxidative stress response. Possesses both a p53/TP53-independent intracellular reactive oxygen species (ROS) regulatory function and a p53/TP53-dependent transcription regulatory function. Positively regulates p53/TP53 and p73/TP73 and stimulates their capacity to induce apoptosis and regulate cell cycle. In response to double-strand DNA breaks, promotes p53/TP53 phosphorylation on 'Ser-46' and subsequent apoptosis. Acts as a tumor suppressor by inducing cell death by an autophagy and caspase-dependent mechanism. Can reduce cell migration by regulating the expression of SPARC. The protein is Tumor protein p53-inducible nuclear protein 1 (Trp53inp1) of Rattus norvegicus (Rat).